We begin with the raw amino-acid sequence, 496 residues long: Myotilin (496 aa).

The interval 1–37 (MFNYERPKHFIQPQNPCGSRLQPPGPEVSGFPSQTKQ) is disordered. Omega-N-methylarginine is present on R20. Residues 78–149 (PNPGQKVTAT…PTPKTPDHEI (72 aa)) form a necessary for interaction with ACTN1 region. Composition is skewed to polar residues over residues 202-213 (NSDVQDSPQHNP) and 221-233 (PTSQ…SSRA). The interval 202 to 239 (NSDVQDSPQHNPEQARLHVPTSQVRSRSSSRAEANDQD) is disordered. The segment at 213–491 (PEQARLHVPT…QRLAAQSGLY (279 aa)) is necessary for interaction with FLNC. The interval 213–496 (PEQARLHVPT…QSGLYESEEL (284 aa)) is necessary for interaction with ACTA1. 2 consecutive Ig-like C2-type domains span residues 248-333 (PRFI…ATFT) and 347-439 (PMFI…LDVT).

This sequence belongs to the myotilin/palladin family. Homodimer. Interacts with ACTA1, ACTN1, FLNA, FLNB, FLNC, and MYOZ2. Interacts with the C-terminal region of MYOZ1. In terms of tissue distribution, expressed in skeletal muscle (at protein level).

The protein resides in the cell membrane. Its subcellular location is the sarcolemma. It is found in the cytoplasm. It localises to the cytoskeleton. The protein localises to the myofibril. The protein resides in the sarcomere. Its subcellular location is the z line. Its function is as follows. Component of a complex of multiple actin cross-linking proteins. Involved in the control of myofibril assembly and stability at the Z lines in muscle cells. In Mus musculus (Mouse), this protein is Myotilin (Myot).